The chain runs to 290 residues: Bifunctional protein FolD (290 aa).

NADP(+)-binding positions include 167–169 (GRS), S192, and I233.

The protein belongs to the tetrahydrofolate dehydrogenase/cyclohydrolase family. Homodimer.

The enzyme catalyses (6R)-5,10-methylene-5,6,7,8-tetrahydrofolate + NADP(+) = (6R)-5,10-methenyltetrahydrofolate + NADPH. The catalysed reaction is (6R)-5,10-methenyltetrahydrofolate + H2O = (6R)-10-formyltetrahydrofolate + H(+). The protein operates within one-carbon metabolism; tetrahydrofolate interconversion. Catalyzes the oxidation of 5,10-methylenetetrahydrofolate to 5,10-methenyltetrahydrofolate and then the hydrolysis of 5,10-methenyltetrahydrofolate to 10-formyltetrahydrofolate. In Azorhizobium caulinodans (strain ATCC 43989 / DSM 5975 / JCM 20966 / LMG 6465 / NBRC 14845 / NCIMB 13405 / ORS 571), this protein is Bifunctional protein FolD.